We begin with the raw amino-acid sequence, 359 residues long: Tyrosine-protein phosphatase non-receptor type 7 (359 aa).

The disordered stretch occupies residues 1–34 (MVQACEGRSRAQLPTLSLGADMTQPPPAKAPAKK). Residues 38 to 51 (LQERRGSSVALMLD) are interaction with MAP kinases. Ser44 is subject to Phosphoserine. Residue Thr66 is modified to Phosphothreonine. Residues Ser93 and Ser143 each carry the phosphoserine modification. Positions 97 to 349 (LEEEFLKIPS…QFLHHTLALY (253 aa)) constitute a Tyrosine-protein phosphatase domain. Substrate-binding positions include Asp257, 290-296 (CSAGIGR), and Gln334. Cys290 functions as the Phosphocysteine intermediate in the catalytic mechanism. Cys290 carries the post-translational modification Cysteine sulfenic acid (-SOH).

It belongs to the protein-tyrosine phosphatase family. Non-receptor class subfamily. Post-translationally, oxidized at active site cysteine. Treatment with pervanadate (vanadate and H(2)O(2)) or with antigen enhanced oxidation of active site cysteine.

The protein localises to the cytoplasm. Its subcellular location is the cytoskeleton. It carries out the reaction O-phospho-L-tyrosyl-[protein] + H2O = L-tyrosyl-[protein] + phosphate. With respect to regulation, inhibited in cells after FCER1A triggering. Its function is as follows. May play a role in the regulation of T and B-lymphocyte development and signal transduction. This is Tyrosine-protein phosphatase non-receptor type 7 (Ptpn7) from Rattus norvegicus (Rat).